A 258-amino-acid chain; its full sequence is Ribose-5-phosphate isomerase (258 aa).

This sequence belongs to the ribose 5-phosphate isomerase family.

It localises to the cytoplasm. The catalysed reaction is aldehydo-D-ribose 5-phosphate = D-ribulose 5-phosphate. Its pathway is carbohydrate degradation; pentose phosphate pathway; D-ribose 5-phosphate from D-ribulose 5-phosphate (non-oxidative stage): step 1/1. This Saccharomyces cerevisiae (strain YJM789) (Baker's yeast) protein is Ribose-5-phosphate isomerase (RKI1).